A 252-amino-acid polypeptide reads, in one-letter code: 5-oxoprolinase subunit A (252 aa).

This sequence belongs to the LamB/PxpA family. In terms of assembly, forms a complex composed of PxpA, PxpB and PxpC.

It carries out the reaction 5-oxo-L-proline + ATP + 2 H2O = L-glutamate + ADP + phosphate + H(+). In terms of biological role, catalyzes the cleavage of 5-oxoproline to form L-glutamate coupled to the hydrolysis of ATP to ADP and inorganic phosphate. The sequence is that of 5-oxoprolinase subunit A from Chloroflexus aggregans (strain MD-66 / DSM 9485).